The following is a 402-amino-acid chain: Sensor protein kinase FleS (402 aa).

A Histidine kinase domain is found at 188-393 (SLAHQIRTPL…CATLILPLIP (206 aa)). His-191 carries the phosphohistidine; by autocatalysis modification.

It carries out the reaction ATP + protein L-histidine = ADP + protein N-phospho-L-histidine.. Member of the two-component regulatory system FleS/FleR that regulates the expression of multiple genes involved in flagellar synthesis, adhesion, swarming, motility and antibiotic resistance. May function as a membrane-associated protein kinase that phosphorylates FleR in response to environmental signals leading to activation of specific gene promoters. The polypeptide is Sensor protein kinase FleS (fleS) (Pseudomonas aeruginosa (strain ATCC 15692 / DSM 22644 / CIP 104116 / JCM 14847 / LMG 12228 / 1C / PRS 101 / PAO1)).